A 232-amino-acid chain; its full sequence is Large ribosomal subunit protein uL1 (232 aa).

Belongs to the universal ribosomal protein uL1 family. In terms of assembly, part of the 50S ribosomal subunit.

In terms of biological role, binds directly to 23S rRNA. The L1 stalk is quite mobile in the ribosome, and is involved in E site tRNA release. Its function is as follows. Protein L1 is also a translational repressor protein, it controls the translation of the L11 operon by binding to its mRNA. This is Large ribosomal subunit protein uL1 from Mesorhizobium japonicum (strain LMG 29417 / CECT 9101 / MAFF 303099) (Mesorhizobium loti (strain MAFF 303099)).